An 894-amino-acid polypeptide reads, in one-letter code: Alanine--tRNA ligase (894 aa).

Residues H569, H573, C683, and H687 each coordinate Zn(2+).

Belongs to the class-II aminoacyl-tRNA synthetase family. Zn(2+) is required as a cofactor.

The protein localises to the cytoplasm. It carries out the reaction tRNA(Ala) + L-alanine + ATP = L-alanyl-tRNA(Ala) + AMP + diphosphate. In terms of biological role, catalyzes the attachment of alanine to tRNA(Ala) in a two-step reaction: alanine is first activated by ATP to form Ala-AMP and then transferred to the acceptor end of tRNA(Ala). Also edits incorrectly charged Ser-tRNA(Ala) and Gly-tRNA(Ala) via its editing domain. The chain is Alanine--tRNA ligase from Chloroflexus aurantiacus (strain ATCC 29366 / DSM 635 / J-10-fl).